The following is a 104-amino-acid chain: Defensin-2 (104 aa).

The first 19 residues, 1-19, serve as a signal peptide directing secretion; that stretch reads MKFFVLFAILIAIVHASCA. Intrachain disulfides connect Cys64–Cys95, Cys81–Cys100, and Cys85–Cys102.

Belongs to the invertebrate defensin family. Type 1 subfamily. Low expression in head and thorax.

It localises to the secreted. In terms of biological role, antibacterial peptide mostly active against Gram-positive bacteria. This Apis mellifera (Honeybee) protein is Defensin-2.